The chain runs to 75 residues: Large ribosomal subunit protein bL31 (75 aa).

In terms of assembly, part of the 50S ribosomal subunit.

Functionally, binds the 23S rRNA. The chain is Large ribosomal subunit protein bL31 from Rhodopseudomonas palustris (strain ATCC BAA-98 / CGA009).